The chain runs to 649 residues: Mitochondrial Rho GTPase 1 (649 aa).

The Cytoplasmic portion of the chain corresponds to 1 to 623 (MTKETIRVVI…KPTNIDYSSA (623 aa)). The Miro 1 domain occupies 3–176 (KETIRVVICG…FYLCQRSISY (174 aa)). GTP contacts are provided by residues 12-19 (GDDGVGKT), 61-63 (DTD), and 115-118 (NKCD). 2 consecutive EF-hand domains span residues 192–227 (SAVAALSRIFFLSDEDQDGFLNDNEIMDLQRKCFGK) and 320–355 (KGYRFLVDIFIKFDSDNDGALNDTELHTLFRSTPGL). Ca(2+) is bound by residues D205, D207, D209, E216, D333, D335, D337, and E344. Positions 436–601 (RKVFNCFVVG…FKKIIQASLE (166 aa)) constitute a Miro 2 domain. Residues 445 to 452 (GKRNSGKS), 481 to 485 (EVTGD), and 550 to 553 (LKAD) each bind GTP. Residues 624–644 (VILGSSIGFLALFSYTMIKLL) form a helical; Anchor for type IV membrane protein membrane-spanning segment. The Mitochondrial intermembrane segment spans residues 645 to 649 (KPTQQ).

It belongs to the mitochondrial Rho GTPase family.

The protein localises to the mitochondrion outer membrane. Functionally, mitochondrial GTPase involved in mitochondrial trafficking. Probably involved in control of anterograde transport of mitochondria and their subcellular distribution. In Candida glabrata (strain ATCC 2001 / BCRC 20586 / JCM 3761 / NBRC 0622 / NRRL Y-65 / CBS 138) (Yeast), this protein is Mitochondrial Rho GTPase 1 (GEM1).